Consider the following 325-residue polypeptide: Tagatose 1,6-diphosphate aldolase 1 (325 aa).

The protein belongs to the aldolase LacD family.

It catalyses the reaction D-tagatofuranose 1,6-bisphosphate = D-glyceraldehyde 3-phosphate + dihydroxyacetone phosphate. The protein operates within carbohydrate metabolism; D-tagatose 6-phosphate degradation; D-glyceraldehyde 3-phosphate and glycerone phosphate from D-tagatose 6-phosphate: step 2/2. The protein is Tagatose 1,6-diphosphate aldolase 1 (lacD1) of Enterococcus faecalis (strain ATCC 700802 / V583).